Here is an 840-residue protein sequence, read N- to C-terminus: Phosphatidylglycerol lysyltransferase (840 aa).

The Cytoplasmic portion of the chain corresponds to 1–8 (MNQEVKNK). A helical transmembrane segment spans residues 9–29 (IFSILKITFATALFIFVAITL). Residues 30–52 (YRELSGINFKDTLVEFSKINRMS) lie on the Extracellular side of the membrane. A helical transmembrane segment spans residues 53–73 (LVLLFIGGGASLVILSMYDVI). Residues 74–89 (LSRALKMDISLGKVLR) are Cytoplasmic-facing. The helical transmembrane segment at 90-110 (VSYIINALNAIVGFGGFIGAG) threads the bilayer. The Extracellular segment spans residues 111–128 (VRAMVYKNYTHDKKKLVH). The helical transmembrane segment at 129 to 149 (FISLILISMLTGLSLLSLLIV) threads the bilayer. The Cytoplasmic segment spans residues 150–161 (FHVFDASLILDK). Residues 162–182 (ITWVRWVLYVVSFFLPLFIIY) form a helical membrane-spanning segment. The Extracellular segment spans residues 183-200 (SMVRPPDKNNRFVGLYCT). Residues 201-221 (LVSCVEWLAAAVVLYFCGVIV) traverse the membrane as a helical segment. Topologically, residues 222 to 229 (DAHVSFMS) are cytoplasmic. Residues 230 to 250 (FIAIFIIAALSGLVSFIPGGF) traverse the membrane as a helical segment. The Extracellular portion of the chain corresponds to 251 to 271 (GAFDLVVLLGFKTLGVPEEKV). Residues 272–292 (LLMLLLYRFAYYFVPVIIALI) traverse the membrane as a helical segment. Topologically, residues 293-337 (LSSFEFGTSAKKYIEGSKYFIPAKDVTSFLMSYQKDIIAKIPSLS) are cytoplasmic. A helical membrane pass occupies residues 338–358 (LAILVFFTSMIFFVNNLTIVY). At 359–369 (DALYDGNHLTY) the chain is on the extracellular side. A helical membrane pass occupies residues 370 to 390 (YILLAIHTSACLLLLLNVVGI). Topologically, residues 391 to 394 (YKQS) are cytoplasmic. Transmembrane regions (helical) follow at residues 395 to 415 (RRAI…TFFT) and 416 to 436 (YASY…IVAF). Over 437–450 (RRARRLKRPVRMRN) the chain is Cytoplasmic. A helical membrane pass occupies residues 451–471 (IVAMLLFSLFILYVNHIFIAG). The Extracellular segment spans residues 472–489 (TLYALDIYTIEMHTSVLR). Residues 490–510 (YYFWLTILIIAIIIGMIAWLF) form a helical membrane-spanning segment. Topologically, residues 511–840 (DYQFSKVRIS…SKVMRVIRHK (330 aa)) are cytoplasmic.

The protein belongs to the LPG synthase family.

It localises to the cell membrane. The enzyme catalyses L-lysyl-tRNA(Lys) + a 1,2-diacyl-sn-glycero-3-phospho-(1'-sn-glycerol) = a 1,2-diacyl-sn-glycero-3-phospho-1'-(3'-O-L-lysyl)-sn-glycerol + tRNA(Lys). In terms of biological role, catalyzes the transfer of a lysyl group from L-lysyl-tRNA(Lys) to membrane-bound phosphatidylglycerol (PG), which produces lysylphosphatidylglycerol (LPG), a major component of the bacterial membrane with a positive net charge. LPG synthesis contributes to bacterial virulence as it is involved in the resistance mechanism against cationic antimicrobial peptides (CAMP) produces by the host's immune system (defensins, cathelicidins) and by the competing microorganisms (bacteriocins). In fact, the modification of anionic phosphatidylglycerol with positively charged L-lysine results in repulsion of the peptides. The chain is Phosphatidylglycerol lysyltransferase (mprF) from Staphylococcus aureus (strain COL).